The following is a 443-amino-acid chain: MTQATATAVVHDLIGVGFGPSNIALAIALQERAQAQGALEVLFLDKQGDYRWHGNTLVSQSELQISFLKDLVSLRNPTSPYSFVNYLHKHDRLVDFINLGTFYPCRMEFNDYLRWVASHFQEQSRYGEEVLRIEPMLSAGQVEALRVISRNADGEELVRTTRALVVSPGGTPRIPQVFRALKGDGRVFHHSQYLEHMAKQPCSSGKPMKIAIIGGGQSAAEAFIDLNDSYPSVQADMILRASALKPADDSPFVNEVFAPKFTDLIYSREHAERERLLREYHNTNYSVVDTDLIERIYGVFYRQKVSGIPRHAFRCMTTVERATATAQGIELALRDAGSGELSVETYDAVILATGYERQLHRQLLEPLAEYLGDHEIGRDYRLQTDERCKVAIYAQGFSQASHGLSDTLLSVLPVRAEEISGSLYQHLKPGTAARALHEHALAS.

FAD is bound by residues 45–53 and Gln64; that span reads DKQGDYRWH. Position 69 (Lys69) interacts with substrate. An FAD-binding site is contributed by Val130. NADP(+) is bound by residues 215–218 and Arg240; that span reads GGQS. Substrate-binding positions include 254 to 257 and Asn284; that span reads NEVF. Residue 284–286 coordinates NADP(+); sequence NYS. 407–409 is an FAD binding site; sequence TLL. Position 410 (Ser410) interacts with substrate.

This sequence belongs to the lysine N(6)-hydroxylase/L-ornithine N(5)-oxygenase family. Homotetramer. It depends on FAD as a cofactor.

Its subcellular location is the cell inner membrane. The catalysed reaction is L-ornithine + NADPH + O2 = N(5)-hydroxy-L-ornithine + NADP(+) + H2O. The protein operates within siderophore biosynthesis; pyoverdin biosynthesis. Functionally, catalyzes the conversion of L-ornithine to N(5)-hydroxyornithine, the first step in the biosynthesis of all hydroxamate-containing siderophores, such as pyoverdin. Pyoverdin is a hydroxamate siderophore composed of a 6,7-dihydroxyquinoline-containing fluorescent chromophore joined to the N-terminus of a partly cyclic octapeptide (D-Ser-L-Arg-D-Ser-L-N(5)-OH-Orn-L-Lys-L-N(5)-OH-Orn-L-Thr-L-Thr in strain PAO1). Specific for NADPH, which plays a role in stabilization of the C4a-hydroperoxyflavin intermediate. The sequence is that of L-ornithine N(5)-monooxygenase from Pseudomonas aeruginosa (strain ATCC 15692 / DSM 22644 / CIP 104116 / JCM 14847 / LMG 12228 / 1C / PRS 101 / PAO1).